A 256-amino-acid polypeptide reads, in one-letter code: Protein CC2D2B homolog (256 aa).

Residues 1–24 (MSEEMDNVTAEEITDKHLQKDLDA) form a disordered region. Residues 13-22 (ITDKHLQKDL) show a composition bias toward basic and acidic residues. Coiled coils occupy residues 136–159 (DLLK…KANI) and 194–214 (EIYK…EEGK).

The protein is Protein CC2D2B homolog of Macaca fascicularis (Crab-eating macaque).